Reading from the N-terminus, the 245-residue chain is Demethylmenaquinone methyltransferase (245 aa).

S-adenosyl-L-methionine contacts are provided by residues Thr62, Asp80, 105–106 (DA), and Ser122.

It belongs to the class I-like SAM-binding methyltransferase superfamily. MenG/UbiE family.

It carries out the reaction a 2-demethylmenaquinol + S-adenosyl-L-methionine = a menaquinol + S-adenosyl-L-homocysteine + H(+). It participates in quinol/quinone metabolism; menaquinone biosynthesis; menaquinol from 1,4-dihydroxy-2-naphthoate: step 2/2. Its function is as follows. Methyltransferase required for the conversion of demethylmenaquinol (DMKH2) to menaquinol (MKH2). The sequence is that of Demethylmenaquinone methyltransferase from Clavibacter sepedonicus (Clavibacter michiganensis subsp. sepedonicus).